A 640-amino-acid chain; its full sequence is DNA mismatch repair protein MutL (640 aa).

Residues T343–P389 form a disordered region. The segment covering Q350–H373 has biased composition (basic and acidic residues).

This sequence belongs to the DNA mismatch repair MutL/HexB family.

Its function is as follows. This protein is involved in the repair of mismatches in DNA. It is required for dam-dependent methyl-directed DNA mismatch repair. May act as a 'molecular matchmaker', a protein that promotes the formation of a stable complex between two or more DNA-binding proteins in an ATP-dependent manner without itself being part of a final effector complex. The protein is DNA mismatch repair protein MutL of Desulforamulus reducens (strain ATCC BAA-1160 / DSM 100696 / MI-1) (Desulfotomaculum reducens).